The sequence spans 669 residues: DNA ligase (669 aa).

NAD(+)-binding positions include 33-37 (DAEYD), 82-83 (SL), and E114. K116 functions as the N6-AMP-lysine intermediate in the catalytic mechanism. 4 residues coordinate NAD(+): R137, E174, K291, and K315. Zn(2+) is bound by residues C409, C412, C427, and C433. The 77-residue stretch at 593-669 (EIPQPLAGKV…QTEQDLLALL (77 aa)) folds into the BRCT domain.

Belongs to the NAD-dependent DNA ligase family. LigA subfamily. Mg(2+) serves as cofactor. It depends on Mn(2+) as a cofactor.

It carries out the reaction NAD(+) + (deoxyribonucleotide)n-3'-hydroxyl + 5'-phospho-(deoxyribonucleotide)m = (deoxyribonucleotide)n+m + AMP + beta-nicotinamide D-nucleotide.. Functionally, DNA ligase that catalyzes the formation of phosphodiester linkages between 5'-phosphoryl and 3'-hydroxyl groups in double-stranded DNA using NAD as a coenzyme and as the energy source for the reaction. It is essential for DNA replication and repair of damaged DNA. The sequence is that of DNA ligase from Vibrio vulnificus (strain YJ016).